A 69-amino-acid chain; its full sequence is Cell division protein ZapB (69 aa).

The stretch at 6-68 (LEQLEARVQS…LGKMDQMNSE (63 aa)) forms a coiled coil.

Belongs to the ZapB family. Homodimer. The ends of the coiled-coil dimer bind to each other, forming polymers. Interacts with FtsZ.

The protein resides in the cytoplasm. Non-essential, abundant cell division factor that is required for proper Z-ring formation. It is recruited early to the divisome by direct interaction with FtsZ, stimulating Z-ring assembly and thereby promoting cell division earlier in the cell cycle. Its recruitment to the Z-ring requires functional FtsA or ZipA. This is Cell division protein ZapB from Tolumonas auensis (strain DSM 9187 / NBRC 110442 / TA 4).